A 316-amino-acid polypeptide reads, in one-letter code: Acetyl-coenzyme A carboxylase carboxyl transferase subunit alpha (316 aa).

The CoA carboxyltransferase C-terminal domain occupies 39-293 (RLQDKSKALT…RGELLTQLKM (255 aa)).

It belongs to the AccA family. Acetyl-CoA carboxylase is a heterohexamer composed of biotin carboxyl carrier protein (AccB), biotin carboxylase (AccC) and two subunits each of ACCase subunit alpha (AccA) and ACCase subunit beta (AccD).

It is found in the cytoplasm. The catalysed reaction is N(6)-carboxybiotinyl-L-lysyl-[protein] + acetyl-CoA = N(6)-biotinyl-L-lysyl-[protein] + malonyl-CoA. It functions in the pathway lipid metabolism; malonyl-CoA biosynthesis; malonyl-CoA from acetyl-CoA: step 1/1. Its function is as follows. Component of the acetyl coenzyme A carboxylase (ACC) complex. First, biotin carboxylase catalyzes the carboxylation of biotin on its carrier protein (BCCP) and then the CO(2) group is transferred by the carboxyltransferase to acetyl-CoA to form malonyl-CoA. This chain is Acetyl-coenzyme A carboxylase carboxyl transferase subunit alpha, found in Pseudomonas aeruginosa (strain LESB58).